The primary structure comprises 423 residues: uncharacterized protein (423 aa).

This sequence belongs to the IIV-6 198R family.

This is an uncharacterized protein from Aedes vexans (Inland floodwater mosquito).